The sequence spans 308 residues: MDCVENARLQSKVLIESLPYLRQFHGETVVIKYGGHAMKDEALKKAFALNVALLKLVGINPVIVHGGGPQIGKMLEQLNIQSHFREGLRVTDDATMDVVEMVLVGKVNKEIVNQMNLAGAKAVGLSGKDGMLIRARKMEMVISKEAQAPEIIDLGKVGEVMGVNTTLLRSLERDGFVPVIAPVGVDDNGETYNINADAVAGAVAAALKAKRLLLLTDVAGILDHDKKLIRSVNMREAVNLFSDGTLTGGMIPKVKCCLEALEEGVEKAMIIDGRTENCILLELLTDKGVGTEIVSDRAAQAACNCVLR.

Substrate-binding positions include 67–68 (GG), arginine 89, and asparagine 193.

This sequence belongs to the acetylglutamate kinase family. ArgB subfamily.

Its subcellular location is the cytoplasm. It catalyses the reaction N-acetyl-L-glutamate + ATP = N-acetyl-L-glutamyl 5-phosphate + ADP. It functions in the pathway amino-acid biosynthesis; L-arginine biosynthesis; N(2)-acetyl-L-ornithine from L-glutamate: step 2/4. Catalyzes the ATP-dependent phosphorylation of N-acetyl-L-glutamate. This is Acetylglutamate kinase from Nitratidesulfovibrio vulgaris (strain DP4) (Desulfovibrio vulgaris).